Consider the following 136-residue polypeptide: Large ribosomal subunit protein uL16c (136 aa).

It belongs to the universal ribosomal protein uL16 family. In terms of assembly, part of the 50S ribosomal subunit.

The protein resides in the plastid. It localises to the chloroplast. The sequence is that of Large ribosomal subunit protein uL16c from Zea mays (Maize).